Reading from the N-terminus, the 162-residue chain is Haemaphysalin (162 aa).

Residues 1–17 (MHLPATIVFFTCTGVFS) form the signal peptide. N57 carries an N-linked (GlcNAc...) asparagine glycan. The region spanning 90–145 (CLQPPETGIFDIGWSTYYVYNSRKNMCKPVKKMKFRKTTSKQKNLFNSEEECQQEC) is the BPTI/Kunitz inhibitor domain. Cystine bridges form between C90-C145 and C116-C141.

As to quaternary structure, interacts with host coagulation factor XII (F12) (inactive and activated) (via fibronectin type II domain). Interacts with host high molecular weight kininogen (KNG1) (via amino acids 421-466 and 459-513). Salivary gland.

The protein resides in the secreted. With respect to regulation, zn(2+) modulates binding to host coagulation factor XII (F12) and high molecular weight kininogen (KNG1). Anticoagulant protein. Inhibits activation of host plasma kallikrein-kinin system by interfering with reciprocal activation between coagulation factor XII (F12) and prekallikrein (KLKB1) without affecting their amidolytic activities. The chain is Haemaphysalin from Haemaphysalis longicornis (Bush tick).